Consider the following 368-residue polypeptide: Nuclease EXOG, mitochondrial (368 aa).

The N-terminal 41 residues, 1–41, are a transit peptide targeting the mitochondrion; it reads MAAKSFASRLRDSRRFLNGFLAGAVVGAAGAGLTALQFFRR. His140 (proton acceptor) is an active-site residue. Asn171 is an a divalent metal cation binding site.

It belongs to the DNA/RNA non-specific endonuclease family. In terms of assembly, homodimer. Requires a divalent metal cation as cofactor.

The protein localises to the mitochondrion inner membrane. Its function is as follows. Endo/exonuclease with nicking activity towards supercoiled DNA, a preference for single-stranded DNA and 5'-3' exonuclease activity. In Mus musculus (Mouse), this protein is Nuclease EXOG, mitochondrial (Exog).